We begin with the raw amino-acid sequence, 377 residues long: MKEIARHCTFSPMKIKEKKGYFISFSALFLIAYMFVAAVPLGADPYFLPIWARDLASELHXERPERAVRVNADTVQTLQPFMVGEYFGYFTDZGSVVFATRVTQRLSASTHAWAVYPEHAVRTPVFNPAGEHLAEIAEPGFVHIEADRFFLFSPGGNAVSSYDARGVQRWRVLHTAPITAFHSSAAGAVIGFSDGKVMVVRADGTVRCAFYPGGSTYEIVFGVTLSADGTLAACVCGLDRQRVILVSLADVQCKIVHHQYLEGALRHQLLMNFDTEGRYVVFEHAQGVGVIDCQRLETNIIPLVGDVVGMGVQPECDVVTVLSQKEQRCRFAVFERAVHRVGDVRFDAQDVSLTQGEKKFFLSIDMLLARIDIAGIP.

Residues 21-43 (YFISFSALFLIAYMFVAAVPLGA) traverse the membrane as a helical segment.

The protein localises to the membrane. This is an uncharacterized protein from Treponema pallidum (strain Nichols).